Reading from the N-terminus, the 210-residue chain is Urease accessory protein UreF (210 aa).

Belongs to the UreF family. In terms of assembly, ureD, UreF and UreG form a complex that acts as a GTP-hydrolysis-dependent molecular chaperone, activating the urease apoprotein by helping to assemble the nickel containing metallocenter of UreC. The UreE protein probably delivers the nickel.

It is found in the cytoplasm. In terms of biological role, required for maturation of urease via the functional incorporation of the urease nickel metallocenter. The chain is Urease accessory protein UreF from Cereibacter sphaeroides (strain ATCC 17029 / ATH 2.4.9) (Rhodobacter sphaeroides).